A 421-amino-acid polypeptide reads, in one-letter code: Type II methyltransferase M.SfiI (421 aa).

This sequence belongs to the N(4)/N(6)-methyltransferase family. N(4) subfamily.

The catalysed reaction is a 2'-deoxycytidine in DNA + S-adenosyl-L-methionine = an N(4)-methyl-2'-deoxycytidine in DNA + S-adenosyl-L-homocysteine + H(+). In terms of biological role, a beta subtype methylase, recognizes the double-stranded sequence 5'-GGCCNNNNNGGCC-3', methylates C-? on both strands, and protects the DNA from cleavage by the SfiI endonuclease. This Streptomyces fimbriatus protein is Type II methyltransferase M.SfiI.